A 1414-amino-acid polypeptide reads, in one-letter code: DNA-directed RNA polymerase subunit beta' (1414 aa).

Zn(2+) contacts are provided by Cys70, Cys72, Cys85, and Cys88. Residues Asp460, Asp462, and Asp464 each contribute to the Mg(2+) site. Positions 814, 888, 895, and 898 each coordinate Zn(2+). The span at 1392–1403 (EQALSEALKSSA) shows a compositional bias: low complexity. The tract at residues 1392-1414 (EQALSEALKSSAPQEAKAAQKDE) is disordered.

The protein belongs to the RNA polymerase beta' chain family. In terms of assembly, the RNAP catalytic core consists of 2 alpha, 1 beta, 1 beta' and 1 omega subunit. When a sigma factor is associated with the core the holoenzyme is formed, which can initiate transcription. The cofactor is Mg(2+). Requires Zn(2+) as cofactor.

It carries out the reaction RNA(n) + a ribonucleoside 5'-triphosphate = RNA(n+1) + diphosphate. Its function is as follows. DNA-dependent RNA polymerase catalyzes the transcription of DNA into RNA using the four ribonucleoside triphosphates as substrates. This is DNA-directed RNA polymerase subunit beta' from Coxiella burnetii (strain RSA 331 / Henzerling II).